Consider the following 428-residue polypeptide: Spliceosome RNA helicase Ddx39b (428 aa).

Residues 1 to 19 (MAENDVDNELLDYEDDEVE) are compositionally biased toward acidic residues. The disordered stretch occupies residues 1–31 (MAENDVDNELLDYEDDEVETAAGADGTEAPA). A2 bears the N-acetylalanine mark. An N6-acetyllysine; alternate modification is found at K36. K36 is covalently cross-linked (Glycyl lysine isopeptide (Lys-Gly) (interchain with G-Cter in SUMO2); alternate). 2 positions are modified to phosphoserine: S38 and S41. The short motif at 45–73 (SGFRDFLLKPELLRAIVDCGFEHPSEVQH) is the Q motif element. The Helicase ATP-binding domain maps to 76-249 (IPQAILGMDV…RKFMQDPMEI (174 aa)). 89-96 (AKSGMGKT) contacts ATP. The residue at position 172 (T172) is a Phosphothreonine. The DECD box signature appears at 196–199 (DECD). The Helicase C-terminal domain occupies 261 to 422 (GLQQYYVKLK…ELPDEIDISS (162 aa)).

It belongs to the DEAD box helicase family. DECD subfamily. As to quaternary structure, homodimer, and heterodimer with DDX39A. DDX39B interacts with the THO subcomplex to form the THO-DDX39B complex which multimerizes into a 28-subunit tetrameric assembly. Component of the transcription/export (TREX) complex at least composed of ALYREF/THOC4, DDX39B, SARNP/CIP29, CHTOP and the THO subcomplex; in the complex interacts with THOC2. THOC1-THOC2-THOC3-DDX39B subcomplex is sufficient for the interaction with export factor NXF1-NXT1. TREX seems to have a dynamic structure involving ATP-dependent remodeling. Within the TREX complex bridges ALYREF/THOC4 and the THO subcomplex, and, in a ATP-dependent manner, ALYREF/THOC4 and SARNP/CIP29. Component of the spliceosome. Interacts directly with U2AF2. Interacts with RBM8A, RNPS1 and SRRM1, FYTTD1/UIF, THOC1, MX1 and POLDIP3. Interacts with LUZP4. Interacts with SARNP/CIP29 (via the C-terminal domain); the interaction is direct and facilitates RNA binding of DDX39B.

Its subcellular location is the nucleus. It is found in the nucleus speckle. It localises to the cytoplasm. The enzyme catalyses ATP + H2O = ADP + phosphate + H(+). Involved in nuclear export of spliced and unspliced mRNA. Component of the TREX complex which is thought to couple mRNA transcription, processing and nuclear export, and specifically associates with spliced mRNA and not with unspliced pre-mRNA. The TREX complex is recruited to spliced mRNAs by a transcription-independent mechanism, binds to mRNA upstream of the exon-junction complex (EJC) and is recruited in a splicing- and cap-dependent manner to a region near the 5' end of the mRNA where it functions in mRNA export to the cytoplasm via the TAP/NXF1 pathway. The THOC1-THOC2-THOC3 core complex alone is sufficient to promote ATPase activity of DDX39B; in the complex THOC2 is the only component that directly interacts with DDX39B. Associates with SARNP/CIP29, which facilitates RNA binding of DDX39B and likely plays a role in mRNA export. May undergo several rounds of ATP hydrolysis during assembly of TREX to drive subsequent loading of components such as ALYREF/THOC4 and CHTOP onto mRNA. Also associates with pre-mRNA independent of ALYREF/THOC4. Involved in the nuclear export of intronless mRNA; the ATP-bound form is proposed to recruit export adapter ALYREF/THOC4 to intronless mRNA; its ATPase activity is cooperatively stimulated by RNA and ALYREF/THOC4 and ATP hydrolysis is thought to trigger the dissociation from RNA to allow the association of ALYREF/THOC4 and the NXF1-NXT1 heterodimer. Involved in transcription elongation and genome stability. In terms of biological role, splice factor that is required for the first ATP-dependent step in spliceosome assembly and for the interaction of U2 snRNP with the branchpoint. Has both RNA-stimulated ATP binding/hydrolysis activity and ATP-dependent RNA unwinding activity. Even with the stimulation of RNA, the ATPase activity is weak. Can only hydrolyze ATP but not other NTPs. The RNA stimulation of ATPase activity does not have a strong preference for the sequence and length of the RNA. However, ssRNA stimulates the ATPase activity much more strongly than dsRNA. Can unwind 5' or 3' overhangs or blunt end RNA duplexes in vitro. The ATPase and helicase activities are not influenced by U2AF2; the effect of ALYREF/THOC4 is reported conflictingly. In Mus musculus (Mouse), this protein is Spliceosome RNA helicase Ddx39b (Ddx39b).